An 864-amino-acid polypeptide reads, in one-letter code: NT-3 growth factor receptor (864 aa).

The signal sequence occupies residues 1-31; sequence MDVSLCPAKCSFWRIFLLGSVWLDYVGSVLA. Cystine bridges form between Cys32-Cys38 and Cys36-Cys45. Residues 32 to 429 are Extracellular-facing; the sequence is CPANCVCSKT…TVTHKPEEDT (398 aa). Residues Asn68, Asn72, and Asn79 are each glycosylated (N-linked (GlcNAc...) asparagine). LRR repeat units follow at residues 104–125 and 128–149; these read GLQK…AFAK and HLRY…LFQT. Asn133 and Asn163 each carry an N-linked (GlcNAc...) asparagine glycan. The 50-residue stretch at 160-209 folds into the LRRCT domain; sequence NFFNCSCDIRWMQLWQEQGEARLDSQSLYCISADGSQLPLFRMNISQCDL. Cystine bridges form between Cys164-Cys189 and Cys166-Cys207. 7 N-linked (GlcNAc...) asparagine glycosylation sites follow: Asn203, Asn218, Asn232, Asn259, Asn267, Asn272, and Asn294. 2 consecutive Ig-like C2-type domains span residues 210–300 and 309–382; these read PEIS…VALT and SLVE…IAKN. The cysteines at positions 231 and 284 are disulfide-linked. Cys320 and Cys362 are disulfide-bonded. 2 N-linked (GlcNAc...) asparagine glycosylation sites follow: Asn375 and Asn388. Residues 430–453 form a helical membrane-spanning segment; it reads FGVSIAVGLAAFACVLLVVLFIMI. Over 454 to 864 the chain is Cytoplasmic; it reads NKYGRRSKFG…ATPIYLDILG (411 aa). Ser493 carries the post-translational modification Phosphoserine. Tyr516 is subject to Phosphotyrosine; by autocatalysis. Residues 538–853 form the Protein kinase domain; it reads IVLKRELGEG…EIYKILHALG (316 aa). Residues 544–552 and Lys572 each bind ATP; that span reads LGEGAFGKV. Asp679 acts as the Proton acceptor in catalysis. 4 positions are modified to phosphotyrosine; by autocatalysis: Tyr705, Tyr709, Tyr710, and Tyr859.

Belongs to the protein kinase superfamily. Tyr protein kinase family. Insulin receptor subfamily. In terms of assembly, exists in a dynamic equilibrium between monomeric (low affinity) and dimeric (high affinity) structures. Binds SH2B2. Interacts with SQSTM1 and KIDINS220. Interacts with PTPRS. Interacts with MAPK8IP3/JIP3. In terms of processing, ligand-mediated auto-phosphorylation. As to expression, widely expressed, mainly in the nervous tissue.

It is found in the membrane. It catalyses the reaction L-tyrosyl-[protein] + ATP = O-phospho-L-tyrosyl-[protein] + ADP + H(+). Its function is as follows. Receptor tyrosine kinase involved in nervous system and probably heart development. Upon binding of its ligand NTF3/neurotrophin-3, NTRK3 autophosphorylates and activates different signaling pathways, including the phosphatidylinositol 3-kinase/AKT and the MAPK pathways, that control cell survival and differentiation. NTRK3 isoforms containing insertions within the kinase domain can autophosphorylate in response to NTF3/neurotrophin-3, but cannot mediate downstream phenotypic responses. The sequence is that of NT-3 growth factor receptor (Ntrk3) from Rattus norvegicus (Rat).